The following is a 149-amino-acid chain: UPF0178 protein VF_0601 (149 aa).

This sequence belongs to the UPF0178 family.

This Aliivibrio fischeri (strain ATCC 700601 / ES114) (Vibrio fischeri) protein is UPF0178 protein VF_0601.